Here is a 114-residue protein sequence, read N- to C-terminus: Large ribosomal subunit protein uL22 (114 aa).

It belongs to the universal ribosomal protein uL22 family. Part of the 50S ribosomal subunit.

Functionally, this protein binds specifically to 23S rRNA; its binding is stimulated by other ribosomal proteins, e.g. L4, L17, and L20. It is important during the early stages of 50S assembly. It makes multiple contacts with different domains of the 23S rRNA in the assembled 50S subunit and ribosome. Its function is as follows. The globular domain of the protein is located near the polypeptide exit tunnel on the outside of the subunit, while an extended beta-hairpin is found that lines the wall of the exit tunnel in the center of the 70S ribosome. The polypeptide is Large ribosomal subunit protein uL22 (Streptococcus pneumoniae (strain Taiwan19F-14)).